The sequence spans 592 residues: MDLRRRPPKPPVTNNNNSNGSFRSYQPRTSDDDHRRRATTIAPPPKASDALPLPLYLTNAVFFTLFFSVAYYLLHRWRDKIRYNTPLHVVTITELGAIIALIASFIYLLGFFGIDFVQSFISRASGDAWDLADTIDDDDHRLVTCSPPTPIVSVAKLPNPEPIVTESLPEEDEEIVKSVIDGVIPSYSLESRLGDCKRAASIRREALQRVTGRSIEGLPLDGFDYESILGQCCEMPVGYIQIPVGIAGPLLLDGYEYSVPMATTEGCLVASTNRGCKAMFISGGATSTVLKDGMTRAPVVRFASARRASELKFFLENPENFDTLAVVFNRSSRFARLQSVKCTIAGKNAYVRFCCSTGDAMGMNMVSKGVQNVLEYLTDDFPDMDVIGISGNFCSDKKPAAVNWIEGRGKSVVCEAVIRGEIVNKVLKTSVAALVELNMLKNLAGSAVAGSLGGFNAHASNIVSAVFIATGQDPAQNVESSQCITMMEAINDGKDIHISVTMPSIEVGTVGGGTQLASQSACLNLLGVKGASTESPGMNARRLATIVAGAVLAGELSLMSAIAAGQLVRSHMKYNRSSRDISGATTTTTTTT.

The tract at residues Met1–Pro45 is disordered. A compositionally biased stretch (polar residues) spans Val12 to Arg28. Residues Asn16 and Asn19 are each glycosylated (N-linked (GlcNAc...) asparagine). Transmembrane regions (helical) follow at residues Ala47–Val69 and Ala97–Val117. A linker region spans residues Gln118–Glu171. The tract at residues Asp172–Thr592 is catalytic. Glu265 functions as the Charge relay system in the catalytic mechanism. An N-linked (GlcNAc...) asparagine glycan is attached at Asn329. Catalysis depends on charge relay system residues Lys397 and Asp473. His571 (proton donor) is an active-site residue. Residue Asn575 is glycosylated (N-linked (GlcNAc...) asparagine). The residue at position 577 (Ser577) is a Phosphoserine.

This sequence belongs to the HMG-CoA reductase family. In terms of assembly, interacts (via N-terminus) with B''ALPHA and B''BETA. Inactivated by phosphorylation at Ser-577 by KIN10 activated form. Probably also phosphorylated at additional sites. As to expression, found in all tissues. Isoform Short is expressed at low levels specifically in flowers. Expressed in both the tapetum and microspores.

It is found in the endoplasmic reticulum membrane. The enzyme catalyses (R)-mevalonate + 2 NADP(+) + CoA = (3S)-3-hydroxy-3-methylglutaryl-CoA + 2 NADPH + 2 H(+). The protein operates within metabolic intermediate biosynthesis; (R)-mevalonate biosynthesis; (R)-mevalonate from acetyl-CoA: step 3/3. Its activity is regulated as follows. Regulated at the post-translational level in response to alterations of sphingolipid and sterol biosynthetic pathways. Negatively regulated by a PP2A-dependent dephosphorylation occurring at a site different than Ser-577. Completely inhibited by mevinolin (IC(50) = 12.5 nM). Reversibly inactivated by phosphorylation at Ser-577 by spinach or Brassica oleracea HMGR kinases in a cell-free system. Down-regulated by KIN10 through its phosphorylation at Ser-577. Catalyzes the synthesis of mevalonate, the specific precursor of all isoprenoid compounds present in plants. This Arabidopsis thaliana (Mouse-ear cress) protein is 3-hydroxy-3-methylglutaryl-coenzyme A reductase 1.